A 483-amino-acid polypeptide reads, in one-letter code: Phloretin 2'-O-glucosyltransferase (483 aa).

The active-site Proton acceptor is the histidine 15. Histidine 15 lines the an anthocyanidin pocket. The active-site Charge relay is the aspartate 118. 8 residues coordinate UDP-alpha-D-glucose: threonine 140, alanine 360, glutamine 362, histidine 377, tryptophan 380, asparagine 381, serine 382, and glutamate 385. Alanine 400 lines the an anthocyanidin pocket. UDP-alpha-D-glucose contacts are provided by glutamate 401 and glutamine 402.

It belongs to the UDP-glycosyltransferase family.

The catalysed reaction is phloretin + UDP-alpha-D-glucose = phlorizin + UDP + H(+). Functionally, glycosyltransferase that possesses phloretin 2'-O-glycosyltransferase activity. Converts phloretin to phlorizin (phloretin 2'-O-glucoside), a potent antioxidant. Is specific for phloretin and does not possess glycosyltransferase activity toward naringenin, naringenin chalcone, eriodictyol, eriodictyol chalcone, apigenin, luteolin, kaempferol, quercetin, isoliquiritigenin, butein, caffeic acid, 2-coumaric acid, 3-coumaric acid, 3-hydroxybenzoic acid, 3,4-dihydroxybenzoic acid and 3,4-dihydroxyhydrocinnamic acid. Can glycosylate phloretin in the presence of UDP-glucose, UDP-xylose and UDP-galactose. This Pyrus communis (Pear) protein is Phloretin 2'-O-glucosyltransferase.